Reading from the N-terminus, the 223-residue chain is Putative 3-methyladenine DNA glycosylase (223 aa).

Belongs to the DNA glycosylase MPG family.

This Rickettsia typhi (strain ATCC VR-144 / Wilmington) protein is Putative 3-methyladenine DNA glycosylase.